We begin with the raw amino-acid sequence, 92 residues long: FMRFamide-like neuropeptides 5 (92 aa).

The propeptide occupies 1 to 41 (MSSRSTTIAFLFIATLLVFQCVSAQSSAEDADYLEKYQRIA). Residues phenylalanine 51 and phenylalanine 61 each carry the phenylalanine amide modification. A propeptide spanning residues 64-82 (SRNTWEDGYASPSVNELYV) is cleaved from the precursor. The residue at position 91 (phenylalanine 91) is a Phenylalanine amide.

Belongs to the FARP (FMRFamide related peptide) family. Each flp gene is expressed in a distinct set of neurons. Flp-5 is expressed in the ASE sensory neurons, the 14 and M4 cholinergic pharyngeal motoneurons, and the PVT and RMG neurons. It is weakly expressed in the PB and 12 neurons. Also expressed in pharyngeal muscle.

The protein resides in the secreted. FMRFamides and FMRFamide-like peptides are neuropeptides. GAKFIRF-amide has an excitatory effect on dissected pharyngeal myogenic muscle system. This Caenorhabditis elegans protein is FMRFamide-like neuropeptides 5.